The following is a 422-amino-acid chain: Lactose-binding protein (422 aa).

Positions 1–28 (MDYSRLLKRSVSAALTAAALLCSTAAFA) are cleaved as a signal peptide. The segment at 246 to 277 (SNDGIRALTSGDVASVLRGVWITGTVKSQPDQ) is lactose-binding.

It belongs to the bacterial solute-binding protein 1 family.

The protein localises to the periplasm. Functionally, part of the binding-protein-dependent transport system for lactose. The chain is Lactose-binding protein (lacE) from Rhizobium radiobacter (Agrobacterium tumefaciens).